A 196-amino-acid chain; its full sequence is Imidazoleglycerol-phosphate dehydratase (196 aa).

This sequence belongs to the imidazoleglycerol-phosphate dehydratase family.

Its subcellular location is the cytoplasm. The catalysed reaction is D-erythro-1-(imidazol-4-yl)glycerol 3-phosphate = 3-(imidazol-4-yl)-2-oxopropyl phosphate + H2O. Its pathway is amino-acid biosynthesis; L-histidine biosynthesis; L-histidine from 5-phospho-alpha-D-ribose 1-diphosphate: step 6/9. The chain is Imidazoleglycerol-phosphate dehydratase from Clostridium botulinum (strain Kyoto / Type A2).